Reading from the N-terminus, the 247-residue chain is Phosphate import ATP-binding protein PstB (247 aa).

The 241-residue stretch at 2 to 242 folds into the ABC transporter domain; that stretch reads CRDVNVYYGE…PRHPLTEDYI (241 aa). ATP is bound at residue 32–39; the sequence is GPSGCGKS.

Belongs to the ABC transporter superfamily. Phosphate importer (TC 3.A.1.7) family. In terms of assembly, the complex is composed of two ATP-binding proteins (PstB), two transmembrane proteins (PstC and PstA) and a solute-binding protein (PstS).

The protein resides in the cell inner membrane. It catalyses the reaction phosphate(out) + ATP + H2O = ADP + 2 phosphate(in) + H(+). Part of the ABC transporter complex PstSACB involved in phosphate import. Responsible for energy coupling to the transport system. The chain is Phosphate import ATP-binding protein PstB from Methylococcus capsulatus (strain ATCC 33009 / NCIMB 11132 / Bath).